Reading from the N-terminus, the 1252-residue chain is DNA-directed RNA polymerase subunit beta (1252 aa).

The protein belongs to the RNA polymerase beta chain family. The RNAP catalytic core consists of 2 alpha, 1 beta, 1 beta' and 1 omega subunit. When a sigma factor is associated with the core the holoenzyme is formed, which can initiate transcription.

It catalyses the reaction RNA(n) + a ribonucleoside 5'-triphosphate = RNA(n+1) + diphosphate. In terms of biological role, DNA-dependent RNA polymerase catalyzes the transcription of DNA into RNA using the four ribonucleoside triphosphates as substrates. In Chlamydia trachomatis serovar L2 (strain ATCC VR-902B / DSM 19102 / 434/Bu), this protein is DNA-directed RNA polymerase subunit beta.